The following is a 221-amino-acid chain: Large ribosomal subunit protein uL3 (221 aa).

Belongs to the universal ribosomal protein uL3 family. In terms of assembly, part of the 50S ribosomal subunit. Forms a cluster with proteins L14 and L19.

Functionally, one of the primary rRNA binding proteins, it binds directly near the 3'-end of the 23S rRNA, where it nucleates assembly of the 50S subunit. This is Large ribosomal subunit protein uL3 from Chlamydia trachomatis serovar A (strain ATCC VR-571B / DSM 19440 / HAR-13).